Here is a 474-residue protein sequence, read N- to C-terminus: Protein nucleotidyltransferase YdiU (474 aa).

ATP contacts are provided by glycine 89, glycine 91, arginine 92, lysine 112, aspartate 124, glycine 125, arginine 178, and arginine 185. The active-site Proton acceptor is the aspartate 262. Residues asparagine 263 and aspartate 272 each coordinate Mg(2+). An ATP-binding site is contributed by aspartate 272.

The protein belongs to the SELO family. Mg(2+) is required as a cofactor. It depends on Mn(2+) as a cofactor.

The catalysed reaction is L-seryl-[protein] + ATP = 3-O-(5'-adenylyl)-L-seryl-[protein] + diphosphate. It catalyses the reaction L-threonyl-[protein] + ATP = 3-O-(5'-adenylyl)-L-threonyl-[protein] + diphosphate. The enzyme catalyses L-tyrosyl-[protein] + ATP = O-(5'-adenylyl)-L-tyrosyl-[protein] + diphosphate. It carries out the reaction L-histidyl-[protein] + UTP = N(tele)-(5'-uridylyl)-L-histidyl-[protein] + diphosphate. The catalysed reaction is L-seryl-[protein] + UTP = O-(5'-uridylyl)-L-seryl-[protein] + diphosphate. It catalyses the reaction L-tyrosyl-[protein] + UTP = O-(5'-uridylyl)-L-tyrosyl-[protein] + diphosphate. Its function is as follows. Nucleotidyltransferase involved in the post-translational modification of proteins. It can catalyze the addition of adenosine monophosphate (AMP) or uridine monophosphate (UMP) to a protein, resulting in modifications known as AMPylation and UMPylation. This chain is Protein nucleotidyltransferase YdiU, found in Trichodesmium erythraeum (strain IMS101).